The chain runs to 519 residues: 2-isopropylmalate synthase (519 aa).

Positions 12–274 (VVIFDTTLRD…WCNVESTMLT (263 aa)) constitute a Pyruvate carboxyltransferase domain. Mn(2+)-binding residues include Asp-21, His-209, His-211, and Asn-245. The interval 398–519 (KLSSLTVIAG…QRDVPAAAAS (122 aa)) is regulatory domain.

It belongs to the alpha-IPM synthase/homocitrate synthase family. LeuA type 1 subfamily. Homodimer. Mn(2+) is required as a cofactor.

The protein resides in the cytoplasm. The catalysed reaction is 3-methyl-2-oxobutanoate + acetyl-CoA + H2O = (2S)-2-isopropylmalate + CoA + H(+). The protein operates within amino-acid biosynthesis; L-leucine biosynthesis; L-leucine from 3-methyl-2-oxobutanoate: step 1/4. Functionally, catalyzes the condensation of the acetyl group of acetyl-CoA with 3-methyl-2-oxobutanoate (2-ketoisovalerate) to form 3-carboxy-3-hydroxy-4-methylpentanoate (2-isopropylmalate). In Nitrobacter winogradskyi (strain ATCC 25391 / DSM 10237 / CIP 104748 / NCIMB 11846 / Nb-255), this protein is 2-isopropylmalate synthase.